Reading from the N-terminus, the 1216-residue chain is Protein WWC3 (1216 aa).

The interval 1–63 (MPWLSGGRRR…RESAELPLPA (63 aa)) is disordered. Over residues 21–51 (EPPPSAQPQREPPPAPPAAVPTPPAPSAPPP) the composition is skewed to pro residues. 2 WW domains span residues 59-92 (LPLP…DPRD) and 106-139 (DELP…DPRE). Coiled-coil stretches lie at residues 164–250 (KEIY…TLQE) and 354–468 (DRVR…EATR). Disordered regions lie at residues 487-508 (VSSG…SSRG), 546-612 (GRDA…ADSC), and 634-668 (DLPG…VGGT). Over residues 570–598 (PQSLASLSSRSSLSSLSPPSSPLDTPFLP) the composition is skewed to low complexity. Residues 722 to 847 (SNGDPQIHVG…SLSEMQLRWH (126 aa)) form the C2 domain. Residues 885 to 936 (DAVTVLLARTTAQLQAVERELAEERAKLEYTEEEVLEMERKEEQAEAISERS) are a coiled coil. The interaction with PRKCZ stretch occupies residues 1060-1079 (SPFVRNTLERRTLRYKQSCR). Positions 1091–1160 (LDLELDLQAS…RQTRQTKLDY (70 aa)) form a coiled coil.

Belongs to the WWC family. As to quaternary structure, forms homodimers and heterodimers with WWC1 and WWC2. Interacts with DLC1 and PRKCZ. Interacts (via WW domains) with LATS1 and LATS2.

Its subcellular location is the cytoplasm. It is found in the cytosol. In terms of biological role, regulator of the Hippo signaling pathway, also known as the Salvador-Warts-Hippo (SWH) pathway. Enhances phosphorylation of LATS1 and YAP1 and negatively regulates cell proliferation and organ growth due to a suppression of the transcriptional activity of YAP1, the major effector of the Hippo pathway. The polypeptide is Protein WWC3 (Homo sapiens (Human)).